Consider the following 97-residue polypeptide: Large ribosomal subunit protein eL21 (97 aa).

Residues 1–23 form a disordered region; the sequence is MTKMSKGPRSGSRRVMTKSVKNK.

It belongs to the eukaryotic ribosomal protein eL21 family.

The chain is Large ribosomal subunit protein eL21 from Picrophilus torridus (strain ATCC 700027 / DSM 9790 / JCM 10055 / NBRC 100828 / KAW 2/3).